The following is a 374-amino-acid chain: Putative 12-oxophytodienoate reductase 5 (374 aa).

FMN-binding positions include 30–32 (PMT), Ala-63, and Gln-105. 177–180 (HGAN) contributes to the substrate binding site. The active-site Proton donor is the Tyr-182. Arg-229 lines the FMN pocket. Arg-270 serves as a coordination point for substrate. Residues Gly-300 and 321–322 (GR) each bind FMN.

The protein belongs to the NADH:flavin oxidoreductase/NADH oxidase family. The cofactor is FMN.

Putative oxophytodienoate reductase that may be involved in the biosynthesis or metabolism of oxylipin signaling molecules. In Oryza sativa subsp. japonica (Rice), this protein is Putative 12-oxophytodienoate reductase 5 (OPR5).